Here is a 619-residue protein sequence, read N- to C-terminus: 1-deoxy-D-xylulose-5-phosphate synthase (619 aa).

Thiamine diphosphate contacts are provided by residues His74 and 115–117 (GHS). Asp146 is a Mg(2+) binding site. Residues 147 to 148 (GA), Asn175, and Tyr285 contribute to the thiamine diphosphate site. Asn175 serves as a coordination point for Mg(2+). Residues 289–312 (EKSPSKYHAVPPRANEKEKPSKPC) are disordered. The segment covering 302 to 312 (ANEKEKPSKPC) has biased composition (basic and acidic residues). Glu365 is a binding site for thiamine diphosphate.

It belongs to the transketolase family. DXPS subfamily. As to quaternary structure, homodimer. Requires Mg(2+) as cofactor. Thiamine diphosphate serves as cofactor.

The enzyme catalyses D-glyceraldehyde 3-phosphate + pyruvate + H(+) = 1-deoxy-D-xylulose 5-phosphate + CO2. It participates in metabolic intermediate biosynthesis; 1-deoxy-D-xylulose 5-phosphate biosynthesis; 1-deoxy-D-xylulose 5-phosphate from D-glyceraldehyde 3-phosphate and pyruvate: step 1/1. Functionally, catalyzes the acyloin condensation reaction between C atoms 2 and 3 of pyruvate and glyceraldehyde 3-phosphate to yield 1-deoxy-D-xylulose-5-phosphate (DXP). This Clostridium botulinum (strain Eklund 17B / Type B) protein is 1-deoxy-D-xylulose-5-phosphate synthase.